The sequence spans 454 residues: Chromosomal replication initiator protein DnaA (454 aa).

Residues 1 to 80 (MNLSNLWQSC…NPELRISLKE (80 aa)) are domain I, interacts with DnaA modulators. Positions 80 to 117 (EGVKPAPKIVESTPNTSLRSESAVDFQAESSASVKFES) are domain II. Residues 118 to 335 (HLNTKHLFDN…GALNRVKAMQ (218 aa)) are domain III, AAA+ region. The ATP site is built by G163, G165, K166, and T167. Residues 336–454 (DFKGGDIDID…WANLIRTLSA (119 aa)) form a domain IV, binds dsDNA region.

Belongs to the DnaA family. In terms of assembly, oligomerizes as a right-handed, spiral filament on DNA at oriC.

The protein resides in the cytoplasm. Its function is as follows. Plays an essential role in the initiation and regulation of chromosomal replication. ATP-DnaA binds to the origin of replication (oriC) to initiate formation of the DNA replication initiation complex once per cell cycle. Binds the DnaA box (a 9 base pair repeat at the origin) and separates the double-stranded (ds)DNA. Forms a right-handed helical filament on oriC DNA; dsDNA binds to the exterior of the filament while single-stranded (ss)DNA is stabiized in the filament's interior. The ATP-DnaA-oriC complex binds and stabilizes one strand of the AT-rich DNA unwinding element (DUE), permitting loading of DNA polymerase. After initiation quickly degrades to an ADP-DnaA complex that is not apt for DNA replication. Binds acidic phospholipids. The protein is Chromosomal replication initiator protein DnaA of Haemophilus influenzae (strain ATCC 51907 / DSM 11121 / KW20 / Rd).